A 454-amino-acid chain; its full sequence is Phosphoglucosamine mutase (454 aa).

The Phosphoserine intermediate role is filled by S101. Mg(2+)-binding residues include S101, D243, D245, and D247. S101 is modified (phosphoserine).

It belongs to the phosphohexose mutase family. Mg(2+) is required as a cofactor. Activated by phosphorylation.

It catalyses the reaction alpha-D-glucosamine 1-phosphate = D-glucosamine 6-phosphate. Catalyzes the conversion of glucosamine-6-phosphate to glucosamine-1-phosphate. The polypeptide is Phosphoglucosamine mutase (Geotalea daltonii (strain DSM 22248 / JCM 15807 / FRC-32) (Geobacter daltonii)).